Here is a 393-residue protein sequence, read N- to C-terminus: NAD(P)H-quinone oxidoreductase subunit H, chloroplastic (393 aa).

This sequence belongs to the complex I 49 kDa subunit family. In terms of assembly, NDH is composed of at least 16 different subunits, 5 of which are encoded in the nucleus.

It localises to the plastid. The protein localises to the chloroplast thylakoid membrane. The catalysed reaction is a plastoquinone + NADH + (n+1) H(+)(in) = a plastoquinol + NAD(+) + n H(+)(out). The enzyme catalyses a plastoquinone + NADPH + (n+1) H(+)(in) = a plastoquinol + NADP(+) + n H(+)(out). Functionally, NDH shuttles electrons from NAD(P)H:plastoquinone, via FMN and iron-sulfur (Fe-S) centers, to quinones in the photosynthetic chain and possibly in a chloroplast respiratory chain. The immediate electron acceptor for the enzyme in this species is believed to be plastoquinone. Couples the redox reaction to proton translocation, and thus conserves the redox energy in a proton gradient. The sequence is that of NAD(P)H-quinone oxidoreductase subunit H, chloroplastic from Trifolium subterraneum (Subterranean clover).